Consider the following 346-residue polypeptide: Trans-enoyl reductase FFUJ_12240 (346 aa).

40-43 (HDAK) is a binding site for NADP(+). 124-131 (LAIATAGL) contacts substrate. NADP(+)-binding positions include 157 to 160 (ATAT), 180 to 183 (SPSN), Tyr-198, and 245 to 246 (LE). 266–270 (APSIL) contacts substrate. Position 335-336 (335-336 (VH)) interacts with NADP(+).

This sequence belongs to the zinc-containing alcohol dehydrogenase family.

Functionally, trans-enoyl reductase; part of the gene cluster that mediates the biosynthesis of fujikurins A-D, secondary metabolites playing a role during rice infection. The polyketide synthase PKS19 acts with the trans-enoyl reductase FFUJ_12240 and the polyketide transferase FFUJ_12241 to produce fujikurins, however, the biosynthesis pathway has not been identified yet. This Gibberella fujikuroi (strain CBS 195.34 / IMI 58289 / NRRL A-6831) (Bakanae and foot rot disease fungus) protein is Trans-enoyl reductase FFUJ_12240.